A 431-amino-acid polypeptide reads, in one-letter code: Putative F-box/FBD/LRR-repeat protein At4g26350 (431 aa).

In terms of domain architecture, F-box spans 1-47; that stretch reads MDIISQCPDHLLLRILSFIPTKDVIVTSLLSKRWGSLWRWVPKLEYD. LRR repeat units follow at residues 52-78, 85-109, 132-159, 160-185, and 309-334; these read NMRF…HLKN, CRTV…EISI, ILTI…HLRC, IGWA…RLAR, and CTQG…TLTN. Residues 348–398 enclose the FBD domain; that stretch reads CWKRPSSVPACLLSSLQAFTWSGYKGRQGDKEVVKYVLRNATGLKKRIFIS.

This Arabidopsis thaliana (Mouse-ear cress) protein is Putative F-box/FBD/LRR-repeat protein At4g26350.